Reading from the N-terminus, the 523-residue chain is Polypyrimidine tract-binding protein 3 (523 aa).

Positions 1–25 are disordered; sequence MNSSTSAGVYANGNDNKKFKGDRPP. 3 consecutive RRM domains span residues 30 to 114, 153 to 229, and 329 to 403; these read RVLH…NLPN, LRII…FSKL, and SVLL…LSKH. Residue Lys-36 forms a Glycyl lysine isopeptide (Lys-Gly) (interchain with G-Cter in SUMO2) linkage. At Tyr-98 the chain carries Phosphotyrosine. Position 109 is a phosphothreonine (Thr-109). Residue Lys-187 forms a Glycyl lysine isopeptide (Lys-Gly) (interchain with G-Cter in SUMO2) linkage. Lys-394 carries the post-translational modification N6-acetyllysine. Residues 406-426 are disordered; the sequence is VQLPREGQEDQGLTKDFSNSP. Position 425 is a phosphoserine (Ser-425). Residues 446-521 form the RRM 4 domain; sequence ATLHLSNIPP…HHLRVSFSKS (76 aa).

In terms of assembly, interacts with THBS4 (via the acidic amphipathic C-terminus).

In terms of biological role, RNA-binding protein that mediates pre-mRNA alternative splicing regulation. Plays a role in the regulation of cell proliferation, differentiation and migration. Positive regulator of EPO-dependent erythropoiesis. Participates in cell differentiation regulation by repressing tissue-specific exons. Promotes Fas exon 6 skipping. Binds RNA, preferentially to both poly(G) and poly(U). The polypeptide is Polypyrimidine tract-binding protein 3 (Ptbp3) (Mus musculus (Mouse)).